A 608-amino-acid polypeptide reads, in one-letter code: MDKVQHVILVLSGKGGVGKSSVTTQLALSLHDSKVYSRPLKTGILDIDLTGPSIPRMFGKDAERNRIHQSSAGWVPVYTDETKEIGLMSLGFLLTSKNDSVVWRGPKKAAMIRQFISDVSWGELDFLIIDTPPGTGDEHLTIVESLLSETSTVRDVPIDGAVIVTTPQGIATLDVQKEIDFCKKASIKILGIVENMSGYICPHCADCTNIFSSGGGLTLSEKYKLPFLGSVPIDPKFGEMIENLTPDSNIVHLYSKTEMSKKFSFITNEFLNQLYGPRKLDTITTISGHTGRLWSVAAHPMLPLFATSSQDKSVRIYNSNTYNLVHVIDGFHTRSIRRVAWRPIERPVLAVASFDSVVSINEKIDDDWECTAALEGHENEVKCIAWSCNGNYLATCSRDKSVWIWEATEDDEFDCLAVLQEHTQDVKVVTWHPTEDLLVSGSYDNSICFWRDDGDDWALTCQLQGHTNTVWALAFSPNGNTLASADNDGNVFLWIKISSNEDVATIDSTNILRPALQEEWKQQTSLPHIHKGAVYTISWMNDATLCSAGGDGKIVVYQREKHDEALWHVAYEQDHAHGVYEINSLEYLRDDRLLSGGDDGECRVWSFK.

13–20 (GKGGVGKS) provides a ligand contact to ATP. Positions 201 and 204 each coordinate [4Fe-4S] cluster. WD repeat units lie at residues 288-327 (GHTG…LVHV), 331-371 (FHTR…WECT), 376-415 (GHEN…EFDC), 421-460 (EHTQ…WALT), 465-504 (GHTN…EDVA), 529-567 (IHKG…EALW), and 576-608 (AHGV…WSFK).

The protein in the N-terminal section; belongs to the Mrp/NBP35 ATP-binding proteins family. NUBP2/CFD1 subfamily. It in the C-terminal section; belongs to the WD repeat CIA1 family. As to quaternary structure, heterotetramer of 2 nbp35 and 2 SPAC806.02c chains. [4Fe-4S] cluster is required as a cofactor.

The protein localises to the cytoplasm. It localises to the nucleus. Functionally, fusion protein of two essential components of the cytosolic iron-sulfur (Fe/S) protein assembly (CIA) machinery. Required for maturation of extramitochondrial Fe-S proteins. May form a heterotetramer with nubp35, functioning as a Fe-S scaffold complex, mediating the de novo assembly of an Fe-S cluster and its transfer to target apoproteins. In Schizosaccharomyces pombe (strain 972 / ATCC 24843) (Fission yeast), this protein is Probable cytosolic Fe-S cluster assembly factor SPAC806.02c.